A 638-amino-acid chain; its full sequence is MLLAQINRDSQGMTEFPGGGMEAQHVTLCLTEAVTVADGDNLENMEGVSLQAVTLADGSTAYIQHNSKDAKLIDGQVIQLEDGSAAYVQHVPIPKSTGDSLRLEDGQAVQLEDGTTAFIHHTSKDSYDQSALQAVQLEDGTTAYIHHAVQVPQSDTILAIQADGTVAGLHTGDATIDPDTISALEQYAAKVSIDGSESVAGTGMIGENEQEKKMQIVLQGHATRVTAKSQQSGEKAFRCEYDGCGKLYTTAHHLKVHERSHTGDRPYQCEHAGCGKAFATGYGLKSHVRTHTGEKPYRCSEDNCTKSFKTSGDLQKHIRTHTGERPFKCPFEGCGRSFTTSNIRKVHVRTHTGERPYYCTEPGCGRAFASATNYKNHVRIHTGEKPYVCTVPGCDKRFTEYSSLYKHHVVHTHSKPYNCNHCGKTYKQISTLAMHKRTAHNDTEPIEEEQEAFFEPPPGQGEDVLKGSQITYVTGVEGDDVVSTQVATVTQSGLSQQVTLISQDGTQHVNISQADMQAIGNTITMVTQDGTPITVPAHDAVISSAGTHSVAMVTAEGTEGEQVAIVAQDLAAFHTASSEMGHQQHSHHLVTTETRPLTLVATSNGTQIAVQLGEQPSLEEAIRIASRIQQGETPGLDD.

M1 is modified (N-acetylmethionine). A Glycyl lysine isopeptide (Lys-Gly) (interchain with G-Cter in SUMO2) cross-link involves residue K213. C2H2-type zinc fingers lie at residues 237–261 (FRCE…ERSH), 267–291 (YQCE…VRTH), 297–321 (YRCS…IRTH), and 327–351 (FKCP…VRTH). The residue at position 352 (T352) is a Phosphothreonine. 3 consecutive C2H2-type zinc fingers follow at residues 357–381 (YYCT…VRIH), 387–411 (YVCT…HVVH), and 417–440 (YNCN…RTAH). A Glycyl lysine isopeptide (Lys-Gly) (interchain with G-Cter in SUMO2) cross-link involves residue K406.

This sequence belongs to the GLI C2H2-type zinc-finger protein family. Interacts with CHD8. Forms a complex with HCFC1 and ZNF143. In terms of tissue distribution, expressed in all tissues tested, with the strongest expression in ovary.

The protein localises to the nucleus. Its function is as follows. Transcriptional activator. Activates the gene for selenocysteine tRNA (tRNAsec). Binds to the SPH motif of small nuclear RNA (snRNA) gene promoters. Participates in efficient U6 RNA polymerase III transcription via its interaction with CHD8. In complex with HCFC1 and ZNF143, regulates the expression of several genes, including AP2S1, ESCO2, OPHN1, RBL1, UBXN8 and ZNF32. The polypeptide is Zinc finger protein 143 (ZNF143) (Homo sapiens (Human)).